The primary structure comprises 557 residues: uncharacterized protein (557 aa).

A coiled-coil region spans residues 2–45 (NEDETSILNKKMEKIEVEMAEFERLGAEREKEAVERIVQEENQN). 4 disordered regions span residues 39–62 (VQEENQNPEVPSNDDASTDIKSRK), 101–127 (NRTYYKNSQGYRRKPKRDDYNNNRKNF), 356–402 (PSPS…YPSN), and 536–557 (ANATSQPLSNLDTGGSAPYDHI). 4 stretches are compositionally biased toward polar residues: residues 101–110 (NRTYYKNSQG), 358–380 (PSFQEEFPSTSKSPSATPGSSNA), 390–400 (DSATYPTSIYP), and 536–548 (ANATSQPLSNLDT).

The protein resides in the cytoplasm. It localises to the nucleus. This is an uncharacterized protein from Schizosaccharomyces pombe (strain 972 / ATCC 24843) (Fission yeast).